The chain runs to 194 residues: Protein DROOPING LEAF (194 aa).

The C4-type zinc finger occupies 15 to 42; it reads CTYCNTVLAVGVPCKRLMDTVTVKCGHC. The segment at 83–103 is disordered; that stretch reads LVSPTSNEGSPRAPFVVKPPE.

The protein belongs to the YABBY family.

The protein localises to the nucleus. Regulates carpel specification in flower development. Severe or intermediate mutation in DL causes complete or partial homeotic conversion of carpels into stamens without affecting the identities of other floral organs. Interacts antagonistically with class B genes and controls floral meristem determinacy. Regulates midrib formation in leaves probably by inducing cell proliferation in the central region of the leaf. In Oryza sativa subsp. japonica (Rice), this protein is Protein DROOPING LEAF (DL).